We begin with the raw amino-acid sequence, 399 residues long: Acetate kinase (399 aa).

Residue N9 participates in Mg(2+) binding. K16 serves as a coordination point for ATP. A substrate-binding site is contributed by R90. Catalysis depends on D147, which acts as the Proton donor/acceptor. ATP-binding positions include 207–211 (HLGNG), 281–283 (DFR), and 333–337 (GVGEN). E387 provides a ligand contact to Mg(2+).

It belongs to the acetokinase family. As to quaternary structure, homodimer. Mg(2+) serves as cofactor. The cofactor is Mn(2+).

The protein localises to the cytoplasm. It carries out the reaction acetate + ATP = acetyl phosphate + ADP. The protein operates within metabolic intermediate biosynthesis; acetyl-CoA biosynthesis; acetyl-CoA from acetate: step 1/2. Its function is as follows. Catalyzes the formation of acetyl phosphate from acetate and ATP. Can also catalyze the reverse reaction. The polypeptide is Acetate kinase (Mycobacterium sp. (strain JLS)).